We begin with the raw amino-acid sequence, 327 residues long: GMP reductase (327 aa).

The active-site Thioimidate intermediate is Cys-175. 204 to 227 (IIADGGIRTHGDIAKSVRFGASMV) is a binding site for NADP(+).

Belongs to the IMPDH/GMPR family. GuaC type 2 subfamily.

It catalyses the reaction IMP + NH4(+) + NADP(+) = GMP + NADPH + 2 H(+). In terms of biological role, catalyzes the irreversible NADPH-dependent deamination of GMP to IMP. It functions in the conversion of nucleobase, nucleoside and nucleotide derivatives of G to A nucleotides, and in maintaining the intracellular balance of A and G nucleotides. The polypeptide is GMP reductase (Lysinibacillus sphaericus (strain C3-41)).